The chain runs to 158 residues: 2-C-methyl-D-erythritol 2,4-cyclodiphosphate synthase (158 aa).

A divalent metal cation-binding residues include aspartate 9 and histidine 11. Residues 9–11 and 35–36 contribute to the 4-CDP-2-C-methyl-D-erythritol 2-phosphate site; these read DVH and HS. Residue histidine 43 coordinates a divalent metal cation. 4-CDP-2-C-methyl-D-erythritol 2-phosphate-binding positions include 57–59, 62–66, 133–136, phenylalanine 140, and arginine 143; these read DIG, FPDTD, and TTTE.

Belongs to the IspF family. As to quaternary structure, homotrimer. A divalent metal cation serves as cofactor.

The enzyme catalyses 4-CDP-2-C-methyl-D-erythritol 2-phosphate = 2-C-methyl-D-erythritol 2,4-cyclic diphosphate + CMP. Its pathway is isoprenoid biosynthesis; isopentenyl diphosphate biosynthesis via DXP pathway; isopentenyl diphosphate from 1-deoxy-D-xylulose 5-phosphate: step 4/6. In terms of biological role, involved in the biosynthesis of isopentenyl diphosphate (IPP) and dimethylallyl diphosphate (DMAPP), two major building blocks of isoprenoid compounds. Catalyzes the conversion of 4-diphosphocytidyl-2-C-methyl-D-erythritol 2-phosphate (CDP-ME2P) to 2-C-methyl-D-erythritol 2,4-cyclodiphosphate (ME-CPP) with a corresponding release of cytidine 5-monophosphate (CMP). The protein is 2-C-methyl-D-erythritol 2,4-cyclodiphosphate synthase of Haemophilus influenzae (strain PittGG).